The primary structure comprises 500 residues: MATILFLSLLFLSCILLAAFTHKKRQQHQRKPPSPPGFPIIGNLHQLGELPHQSLWRLSKKYGHVMLLKFGSIPTVVVSSSETAKQVLKIHDLHCCSRPSLAGPRALSYNYLDIAFSPFDDYWKELRRICVQELFSVKRVQSFQPIKEDEVKKLIDSVSESASQGTPVNLSEKFTSLTVRVTCKATFGVNFQGTVLNSDRFEKLIHDTYLFLGSFSASDYFPNGGWIIDWLTGLHGQRERSVRALDAFYEQMFDLHKQGNKEGVEDFVDLLLRLEKEETVIGYGKLTRNHIKAILMNVLIGGIGTSAITMTWAMTELMRNPRVMKKVQSEIRNQIGKKSMITLDDIDQLHYLKMVINETWRLHPPSPFLIPRQVMSEFELNDYVIPVKTRLYVNVWAIGRDPDTWKDPEEFLPERFVNSSIDAKGQHFELLPFGSGRRMCPAMYMGTTMVEFGLANMLYHFDWKIPVGMVAEDIDLEESPGLNASKKNELVLVPLKYLDH.

A helical membrane pass occupies residues 1 to 21; that stretch reads MATILFLSLLFLSCILLAAFT. Heme is bound at residue C440.

It belongs to the cytochrome P450 family. It depends on heme as a cofactor.

It is found in the membrane. The sequence is that of Cytochrome P450 71B36 (CYP71B36) from Arabidopsis thaliana (Mouse-ear cress).